We begin with the raw amino-acid sequence, 369 residues long: MCPLWLLAALLALSQALPFEQKAFWDFTLDDGLPMLNDEEASGAETTSGIPDLDSLPPTYSAMCPFGCHCHLRVVQCSDLGLKAVPKEISPDTTLLDLQNNDISELRKDDFKGLQHLYALVLVNNKISKIHEKAFSPLRKLQKLYISKNHLVEIPPNLPSSLVELRIHDNRIRKVPKGVFSGLRNMNCIEMGGNPLENSGFEPGAFDGLKLNYLRISEAKLTGIPKDLPETLNELHLDHNKIQAIELEDLLRYSKLYRLGLGHNQIRMIENGSLSFLPTLRELHLDNNKLSRVPAGLPDLKLLQVVYLHTNNITKVGVNDFCPVGFGVKRAYYNGISLFNNPVPYWEVQPATFRCVTDRLAIQFGNYKK.

The signal sequence occupies residues 1-16 (MCPLWLLAALLALSQA). The propeptide occupies 17 to 37 (LPFEQKAFWDFTLDDGLPMLN). Residues Ser-42 and Ser-48 are each glycosylated (O-linked (Xyl...) (glycosaminoglycan) serine). Cystine bridges form between Cys-64-Cys-70 and Cys-68-Cys-77. 12 LRR repeats span residues 83 to 103 (KAVP…NNDI), 104 to 127 (SELR…NNKI), 128 to 151 (SKIH…KNHL), 152 to 172 (VEIP…DNRI), 173 to 196 (RKVP…GNPL), 197 to 221 (ENSG…EAKL), 222 to 242 (TGIP…HNKI), 243 to 266 (QAIE…HNQI), 267 to 290 (RMIE…NNKL), 291 to 313 (SRVP…TNNI), 314 to 343 (TKVG…NNPV), and 344 to 369 (PYWE…NYKK). Asn-271 and Asn-312 each carry an N-linked (GlcNAc...) asparagine glycan. Cys-322 and Cys-355 are disulfide-bonded.

Belongs to the small leucine-rich proteoglycan (SLRP) family. SLRP class I subfamily. In terms of assembly, homodimer. Forms a ternary complex with MFAP2 and ELN. Post-translationally, the two attached glycosaminoglycan chains can be either chondroitin sulfate or dermatan sulfate. In terms of tissue distribution, found in several connective tissues, especially in articular cartilages.

Its subcellular location is the secreted. The protein resides in the extracellular space. The protein localises to the extracellular matrix. Functionally, may be involved in collagen fiber assembly. This chain is Biglycan (BGN), found in Ovis aries (Sheep).